A 137-amino-acid polypeptide reads, in one-letter code: NADH dehydrogenase [ubiquinone] 1 beta subcomplex subunit 7 (137 aa).

A lipid anchor (N-myristoyl glycine) is attached at glycine 2. The region spanning 56 to 98 (RDYCAHYLIRFLKCKRDSFPNFLACKHERHDWDYCEHLDYVKR) is the CHCH domain. Residues 59 to 69 (CAHYLIRFLKC) carry the Cx9C motif 1 motif. 2 cysteine pairs are disulfide-bonded: cysteine 59/cysteine 90 and cysteine 69/cysteine 80. Serine 73 carries the post-translational modification Phosphoserine. Residues 80–90 (CKHERHDWDYC) carry the Cx9C motif 2 motif. Positions 110–137 (QRKKRREQREADMAKGLGPGEVAPEVAL) are disordered.

It belongs to the complex I NDUFB7 subunit family. As to quaternary structure, complex I is composed of 45 different subunits.

It localises to the mitochondrion inner membrane. The protein resides in the mitochondrion intermembrane space. Its function is as follows. Accessory subunit of the mitochondrial membrane respiratory chain NADH dehydrogenase (Complex I), that is believed not to be involved in catalysis. Complex I functions in the transfer of electrons from NADH to the respiratory chain. The immediate electron acceptor for the enzyme is believed to be ubiquinone. In Bos taurus (Bovine), this protein is NADH dehydrogenase [ubiquinone] 1 beta subcomplex subunit 7 (NDUFB7).